Here is a 123-residue protein sequence, read N- to C-terminus: Small ribosomal subunit protein uS12cz/uS12cy (123 aa).

Belongs to the universal ribosomal protein uS12 family. As to quaternary structure, part of the 30S ribosomal subunit.

The protein localises to the plastid. It is found in the chloroplast. With S4 and S5 plays an important role in translational accuracy. Located at the interface of the 30S and 50S subunits. The protein is Small ribosomal subunit protein uS12cz/uS12cy (rps12-A) of Citrus sinensis (Sweet orange).